The sequence spans 344 residues: Sulfate/thiosulfate import ATP-binding protein CysA (344 aa).

An ABC transporter domain is found at 3–233; sequence ILIDNVSKNF…PESAFVMSFL (231 aa). 35–42 lines the ATP pocket; sequence GPSGCGKS.

Belongs to the ABC transporter superfamily. Sulfate/tungstate importer (TC 3.A.1.6) family. As to quaternary structure, the complex is composed of two ATP-binding proteins (CysA), two transmembrane proteins (CysT and CysW) and a solute-binding protein (CysP).

It is found in the cell inner membrane. The catalysed reaction is sulfate(out) + ATP + H2O = sulfate(in) + ADP + phosphate + H(+). It carries out the reaction thiosulfate(out) + ATP + H2O = thiosulfate(in) + ADP + phosphate + H(+). Its function is as follows. Part of the ABC transporter complex CysAWTP involved in sulfate/thiosulfate import. Responsible for energy coupling to the transport system. The sequence is that of Sulfate/thiosulfate import ATP-binding protein CysA from Gloeobacter violaceus (strain ATCC 29082 / PCC 7421).